The primary structure comprises 885 residues: Translation initiation factor IF-2 (885 aa).

Over residues 123–232 the composition is skewed to basic and acidic residues; the sequence is ETEAKAKAEA…EAERYSDHHI (110 aa). The segment at 123-289 is disordered; that stretch reads ETEAKAKAEA…RNRSTAPESM (167 aa). The segment covering 253–266 has biased composition (basic residues); it reads GRRARNKNTAKTKR. Residues 267–276 show a composition bias toward basic and acidic residues; the sequence is GGKDARDGRE. The tr-type G domain occupies 385–554; that stretch reads PRAPVVTIMG…LLQAEVLELK (170 aa). Residues 394-401 are G1; sequence GHVDHGKT. Residue 394 to 401 coordinates GTP; the sequence is GHVDHGKT. Residues 419 to 423 are G2; it reads GITQH. The tract at residues 440 to 443 is G3; the sequence is DTPG. Residues 440 to 444 and 494 to 497 each bind GTP; these read DTPGH and NKMD. The segment at 494 to 497 is G4; sequence NKMD. A G5 region spans residues 530 to 532; it reads SAK.

This sequence belongs to the TRAFAC class translation factor GTPase superfamily. Classic translation factor GTPase family. IF-2 subfamily.

It is found in the cytoplasm. Its function is as follows. One of the essential components for the initiation of protein synthesis. Protects formylmethionyl-tRNA from spontaneous hydrolysis and promotes its binding to the 30S ribosomal subunits. Also involved in the hydrolysis of GTP during the formation of the 70S ribosomal complex. The polypeptide is Translation initiation factor IF-2 (Shewanella oneidensis (strain ATCC 700550 / JCM 31522 / CIP 106686 / LMG 19005 / NCIMB 14063 / MR-1)).